The sequence spans 329 residues: rRNA 2'-O-methyltransferase fibrillarin (329 aa).

The disordered stretch occupies residues 1–85; that stretch reads MAFGAPRGRG…GGARGGARGG (85 aa). A compositionally biased stretch (gly residues) spans 13 to 84; that stretch reads RGGFGGRGGS…RGGARGGARG (72 aa). S-adenosyl-L-methionine is bound by residues 181-182, 200-201, 225-226, and 245-248; these read TS, EF, DA, and DVAQ.

Belongs to the methyltransferase superfamily. Fibrillarin family. In terms of assembly, component of box C/D small nucleolar ribonucleoprotein (snoRNP) particles that contain SNU13, NOP1, SIK1/NOP56 and NOP58, plus a guide RNA. Post-translationally, by homology to other fibrillarins, some or all of the N-terminal domain arginines are modified to asymmetric dimethylarginine (DMA).

It localises to the nucleus. The protein resides in the nucleolus. It carries out the reaction L-glutaminyl-[histone H2A] + S-adenosyl-L-methionine = N(5)-methyl-L-glutaminyl-[histone H2A] + S-adenosyl-L-homocysteine + H(+). Its function is as follows. S-adenosyl-L-methionine-dependent methyltransferase that has the ability to methylate both RNAs and proteins. Involved in pre-rRNA processing. Utilizes the methyl donor S-adenosyl-L-methionine to catalyze the site-specific 2'-hydroxyl methylation of ribose moieties in pre-ribosomal RNA. Site specificity is provided by a guide RNA that base pairs with the substrate. Methylation occurs at a characteristic distance from the sequence involved in base pairing with the guide RNA. Also acts as a protein methyltransferase by mediating methylation of 'Gln-105' of histone H2A (H2AQ105me), a modification that impairs binding of the FACT complex and is specifically present at 35S ribosomal DNA locus. In Debaryomyces hansenii (strain ATCC 36239 / CBS 767 / BCRC 21394 / JCM 1990 / NBRC 0083 / IGC 2968) (Yeast), this protein is rRNA 2'-O-methyltransferase fibrillarin (NOP1).